Here is a 595-residue protein sequence, read N- to C-terminus: Indole-3-acetic acid-amido synthetase GH3.3 (595 aa).

It belongs to the IAA-amido conjugating enzyme family.

Catalyzes the synthesis of indole-3-acetic acid (IAA)-amino acid conjugates, providing a mechanism for the plant to cope with the presence of excess auxin. Strongly reactive with Glu, Gln, Trp, Asp, Ala, Leu, Phe, Gly, Tyr, Met, Ile and Val. Little or no product formation with His, Ser, Thr, Arg, Lys, or Cys. Also active on pyruvic and butyric acid analogs of IAA, PAA and the synthetic auxin naphthaleneacetic acid (NAA). The two chlorinated synthetic auxin herbicides 2,4-D and 3,6-dichloro-o-anisic acid (dicamba) cannot be used as substrates. The sequence is that of Indole-3-acetic acid-amido synthetase GH3.3 (GH3.3) from Arabidopsis thaliana (Mouse-ear cress).